A 720-amino-acid chain; its full sequence is Replication restart protein PriA (720 aa).

The region spanning 200-366 (ILMKNCFTSW…LHKKCFYIKF (167 aa)) is the Helicase ATP-binding domain. 213 to 220 (KNNFYLKV) serves as a coordination point for ATP. The DEAH box signature appears at 309–312 (NQEH). Cys-425, Cys-428, Cys-434, Cys-437, Cys-452, Cys-455, Cys-465, and Cys-468 together coordinate Zn(2+).

This sequence belongs to the helicase family. PriA subfamily. In terms of assembly, component of the replication restart primosome. It depends on Zn(2+) as a cofactor.

It carries out the reaction Couples ATP hydrolysis with the unwinding of duplex DNA by translocating in the 3'-5' direction.. It catalyses the reaction ATP + H2O = ADP + phosphate + H(+). Functionally, initiates the restart of stalled replication forks, which reloads the replicative helicase on sites other than the origin of replication. Recognizes and binds to abandoned replication forks and remodels them to uncover a helicase loading site. Promotes assembly of the primosome at these replication forks. The chain is Replication restart protein PriA from Buchnera aphidicola subsp. Schizaphis graminum (strain Sg).